Here is a 558-residue protein sequence, read N- to C-terminus: Oligo-1,6-glucosidase (558 aa).

Ca(2+) is bound by residues Asp-21, Asn-23, Asp-25, and Asp-29. Residue Asp-199 is the Nucleophile of the active site. Glu-255 acts as the Proton donor in catalysis.

The protein belongs to the glycosyl hydrolase 13 family.

The protein localises to the cytoplasm. It carries out the reaction Hydrolysis of (1-&gt;6)-alpha-D-glucosidic linkages in some oligosaccharides produced from starch and glycogen by alpha-amylase, and in isomaltose.. The chain is Oligo-1,6-glucosidase (malL) from Bacillus cereus.